The chain runs to 682 residues: Acetyl-coenzyme A synthetase 2-like, mitochondrial (682 aa).

A mitochondrion-targeting transit peptide spans Met-1–Leu-38. Residues Arg-217–Arg-220 and Thr-334 contribute to the CoA site. Lys-389 carries the post-translational modification N6-acetyllysine. Residues Gly-410 to Pro-412, Asp-434 to Thr-439, Asp-526, and Arg-541 contribute to the ATP site. Ser-549 contributes to the CoA binding site. Arg-552 is an ATP binding site. Residue Lys-635 is modified to N6-acetyllysine.

The protein belongs to the ATP-dependent AMP-binding enzyme family. Interacts with SIRT3. Post-translationally, reversibly acetylated at Lys-635. The acetyl-CoA synthase activity is inhibited by acetylation and activated by deacetylation mediated by the deacetylase SIRT3. Highly expressed in heart, testis, kidney, skeletal muscle, lung and spleen. Detected at low levels in brain.

The protein resides in the mitochondrion matrix. The catalysed reaction is acetate + ATP + CoA = acetyl-CoA + AMP + diphosphate. It carries out the reaction propanoate + ATP + CoA = propanoyl-CoA + AMP + diphosphate. With respect to regulation, inhibited by acetylation at Lys-635 and activated by deacetylation mediated by the deacetylase SIRT3. In terms of biological role, catalyzes the synthesis of acetyl-CoA from short-chain fatty acids. Acetate is the preferred substrate. Can also utilize propionate with a much lower affinity. Provides acetyl-CoA that is utilized mainly for oxidation under ketogenic conditions. Involved in thermogenesis under ketogenic conditions, using acetate as a vital fuel when carbohydrate availability is insufficient. This is Acetyl-coenzyme A synthetase 2-like, mitochondrial (Acss1) from Mus musculus (Mouse).